A 333-amino-acid polypeptide reads, in one-letter code: Na(+)-translocating ferredoxin:NAD(+) oxidoreductase complex subunit B (333 aa).

Positions 1-27 (MLNAILVPVGILGVFGLIFGIGLAIAA) are hydrophobic. The region spanning 33–92 (YEDPRVPLVRAALPGANCGGCGLPGCDALAANIVGGSAAIDACPVGGASCAAAVAEIMGM) is the 4Fe-4S domain. [4Fe-4S] cluster-binding residues include Cys-50, Cys-53, Cys-58, Cys-75, Cys-138, Cys-142, Cys-148, Cys-152, Cys-172, Cys-175, Cys-178, Cys-182, Cys-217, Cys-220, Cys-223, Cys-227, Cys-246, Cys-249, Cys-252, Cys-256, Cys-279, Cys-282, Cys-285, Cys-289, Cys-310, Cys-313, Cys-316, and Cys-320. 4Fe-4S ferredoxin-type domains are found at residues 126–162 (REAM…IGED), 163–192 (GLPK…LVPE), 207–237 (KIAR…VENN), 239–266 (AKID…GDVE), 270–299 (STAY…GEIK), and 301–330 (PPYV…MRPN).

Belongs to the 4Fe4S bacterial-type ferredoxin family. RnfB subfamily. As to quaternary structure, the complex is composed of six subunits: RnfA, RnfB, RnfC, RnfD, RnfE and RnfG. [4Fe-4S] cluster is required as a cofactor.

Its subcellular location is the cell membrane. It carries out the reaction 2 reduced [2Fe-2S]-[ferredoxin] + Na(+)(in) + NAD(+) + H(+) = 2 oxidized [2Fe-2S]-[ferredoxin] + Na(+)(out) + NADH. Functionally, part of a membrane-bound complex that couples electron transfer with translocation of ions across the membrane. Couples electron transfer from reduced ferredoxin to NAD(+) with electrogenic movement of Na(+) out of the cell. Involved in caffeate respiration. The polypeptide is Na(+)-translocating ferredoxin:NAD(+) oxidoreductase complex subunit B (Acetobacterium woodii (strain ATCC 29683 / DSM 1030 / JCM 2381 / KCTC 1655 / WB1)).